A 386-amino-acid polypeptide reads, in one-letter code: D-amino-acid oxidase (386 aa).

FAD contacts are provided by glycine 14, glycine 15, valine 16, valine 17, glutamate 39, arginine 40, alanine 51, glycine 52, and glycine 53. The tract at residues 109-138 (SSSPPHPLLPPWVDPSASAAPPRELGTPDT) is disordered. The segment covering 112–121 (PPHPLLPPWV) has biased composition (pro residues). Positions 174, 175, and 176 each coordinate FAD. Positions 253, 261, and 332 each coordinate D-serine. Tyrosine 261 and lysine 332 together coordinate D-proline. 5 residues coordinate FAD: lysine 332, glycine 344, isoleucine 345, glycine 362, and alanine 364. A D-dopa-binding site is contributed by lysine 332. Residue glycine 362 coordinates D-serine. Residue glycine 362 participates in D-proline binding. D-dopa is bound at residue glycine 362.

The protein belongs to the DAMOX/DASOX family.

The enzyme catalyses a D-alpha-amino acid + O2 + H2O = a 2-oxocarboxylate + H2O2 + NH4(+). It catalyses the reaction D-alanine + O2 + H2O = pyruvate + H2O2 + NH4(+). The catalysed reaction is D-aspartate + O2 + H2O = oxaloacetate + H2O2 + NH4(+). Catalyzes the oxidative deamination of D-amino acids with broad substrate specificity. Enables the organism to utilize D-amino acids as a source of nutrients. The sequence is that of D-amino-acid oxidase from Zea mays (Maize).